The primary structure comprises 327 residues: DNA-directed RNA polymerase subunit alpha (327 aa).

Residues 1–243 (MEKFLKYEIK…EHLNPIVNVN (243 aa)) form an alpha N-terminal domain (alpha-NTD) region. The interval 260–327 (RVRSFAKQIE…VHELGLKLRS (68 aa)) is alpha C-terminal domain (alpha-CTD).

Belongs to the RNA polymerase alpha chain family. In terms of assembly, homodimer. The RNAP catalytic core consists of 2 alpha, 1 beta, 1 beta' and 1 omega subunit. When a sigma factor is associated with the core the holoenzyme is formed, which can initiate transcription.

The catalysed reaction is RNA(n) + a ribonucleoside 5'-triphosphate = RNA(n+1) + diphosphate. Its function is as follows. DNA-dependent RNA polymerase catalyzes the transcription of DNA into RNA using the four ribonucleoside triphosphates as substrates. This is DNA-directed RNA polymerase subunit alpha from Mycoplasma pneumoniae (strain ATCC 29342 / M129 / Subtype 1) (Mycoplasmoides pneumoniae).